The primary structure comprises 381 residues: Creatine kinase B-type (381 aa).

Ser-4 carries the phosphoserine modification. Residues 11–98 (KLRFPAEDEF…FDPIIEDRHG (88 aa)) form the Phosphagen kinase N-terminal domain. Thr-35 carries the phosphothreonine modification. Lys-45 participates in a covalent cross-link: Glycyl lysine isopeptide (Lys-Gly) (interchain with G-Cter in ubiquitin). Residue Val-72 coordinates creatine. Basic and acidic residues predominate over residues 96-110 (RHGGYQPSDEHKTDL). The disordered stretch occupies residues 96–122 (RHGGYQPSDEHKTDLNPDNLQGGDDLD). A Glycyl lysine isopeptide (Lys-Gly) (interchain with G-Cter in ubiquitin) cross-link involves residue Lys-107. Tyr-125 carries the phosphotyrosine modification. Residues 125–367 (YVLSSRVRTG…KLLIEMEQRL (243 aa)) enclose the Phosphagen kinase C-terminal domain. ATP contacts are provided by residues 128-132 (SSRVR), Arg-130, Arg-132, and His-191. An internal MTS-like signal region spans residues 130–138 (RVRTGRSIR). Ser-199 carries the post-translational modification Phosphoserine. Position 232 (Glu-232) interacts with creatine. Arg-236 is an ATP binding site. Residue Tyr-269 is modified to 3'-nitrotyrosine. Creatine is bound at residue Ser-285. ATP is bound at residue Arg-292. The residue at position 309 (Ser-309) is a Phosphoserine. ATP is bound by residues Arg-320, 320–325 (RGTGGV), and Asp-335. Thr-322 carries the phosphothreonine modification. Lys-381 participates in a covalent cross-link: Glycyl lysine isopeptide (Lys-Gly) (interchain with G-Cter in ubiquitin).

The protein belongs to the ATP:guanido phosphotransferase family. In terms of assembly, dimer of identical or non-identical chains, which can be either B (brain type) or M (muscle type). With MM being the major form in skeletal muscle and myocardium, MB existing in myocardium, and BB existing in many tissues, especially brain. Interacts with SLC12A6 (via C-terminus); the interaction may be required for SLC12A6 potassium-chloride cotransport activity. Ubiquitinated by the ECS(ASB9) complex, leading to its degradation by the proteasome. As to expression, in the kidney localized primarily in the outer medulla in the thick ascending limb and distal convoluted tubule.

It localises to the cytoplasm. The protein localises to the cytosol. The protein resides in the mitochondrion. It is found in the cell membrane. The catalysed reaction is creatine + ATP = N-phosphocreatine + ADP + H(+). Reversibly catalyzes the transfer of phosphate between ATP and various phosphogens (e.g. creatine phosphate). Creatine kinase isoenzymes play a central role in energy transduction in tissues with large, fluctuating energy demands, such as skeletal muscle, heart, brain and spermatozoa. Acts as a key regulator of adaptive thermogenesis as part of the futile creatine cycle: localizes to the mitochondria of thermogenic fat cells and acts by mediating phosphorylation of creatine to initiate a futile cycle of creatine phosphorylation and dephosphorylation. During the futile creatine cycle, creatine and N-phosphocreatine are in a futile cycle, which dissipates the high energy charge of N-phosphocreatine as heat without performing any mechanical or chemical work. This is Creatine kinase B-type (Ckb) from Rattus norvegicus (Rat).